Reading from the N-terminus, the 57-residue chain is UPF0391 membrane protein BRADO5617 (57 aa).

2 consecutive transmembrane segments (helical) span residues 1–21 (MLGW…LGFG) and 30–50 (IAKI…VVGL).

This sequence belongs to the UPF0391 family.

It is found in the cell membrane. The polypeptide is UPF0391 membrane protein BRADO5617 (Bradyrhizobium sp. (strain ORS 278)).